Consider the following 92-residue polypeptide: MFLYVIAYDIPDDRRRKKMADLLEGYGQRVQYSVFECTLSKSKFNELQKRLRKIYQSEEDSLRFYPLSGHTLTQVDIWGEPPLTKPPGSVIV.

D9 is a Mg(2+) binding site.

The protein belongs to the CRISPR-associated endoribonuclease Cas2 protein family. As to quaternary structure, homodimer, forms a heterotetramer with a Cas1 homodimer. Requires Mg(2+) as cofactor.

In terms of biological role, CRISPR (clustered regularly interspaced short palindromic repeat), is an adaptive immune system that provides protection against mobile genetic elements (viruses, transposable elements and conjugative plasmids). CRISPR clusters contain sequences complementary to antecedent mobile elements and target invading nucleic acids. CRISPR clusters are transcribed and processed into CRISPR RNA (crRNA). Functions as a ssRNA-specific endoribonuclease. Involved in the integration of spacer DNA into the CRISPR cassette. The sequence is that of CRISPR-associated endoribonuclease Cas2 3 from Synechocystis sp. (strain ATCC 27184 / PCC 6803 / Kazusa).